Consider the following 293-residue polypeptide: Diaminopimelate epimerase (293 aa).

Substrate-binding residues include Asn17, Gln49, and Asn69. The Proton donor role is filled by Cys78. Substrate is bound by residues 79–80 (GN), Asn169, Asn203, and 221–222 (ER). Cys230 functions as the Proton acceptor in the catalytic mechanism. A substrate-binding site is contributed by 231–232 (GS).

Belongs to the diaminopimelate epimerase family. As to quaternary structure, homodimer.

It is found in the cytoplasm. It carries out the reaction (2S,6S)-2,6-diaminopimelate = meso-2,6-diaminopimelate. It participates in amino-acid biosynthesis; L-lysine biosynthesis via DAP pathway; DL-2,6-diaminopimelate from LL-2,6-diaminopimelate: step 1/1. Functionally, catalyzes the stereoinversion of LL-2,6-diaminopimelate (L,L-DAP) to meso-diaminopimelate (meso-DAP), a precursor of L-lysine and an essential component of the bacterial peptidoglycan. The sequence is that of Diaminopimelate epimerase from Methylobacterium sp. (strain 4-46).